A 219-amino-acid chain; its full sequence is Ribosomal RNA small subunit methyltransferase G (219 aa).

S-adenosyl-L-methionine contacts are provided by residues Gly78, Phe83, 129–130, and Arg146; that span reads GE.

It belongs to the methyltransferase superfamily. RNA methyltransferase RsmG family.

The protein localises to the cytoplasm. It catalyses the reaction guanosine(527) in 16S rRNA + S-adenosyl-L-methionine = N(7)-methylguanosine(527) in 16S rRNA + S-adenosyl-L-homocysteine. Its function is as follows. Specifically methylates the N7 position of guanine in position 527 of 16S rRNA. The chain is Ribosomal RNA small subunit methyltransferase G from Geotalea uraniireducens (strain Rf4) (Geobacter uraniireducens).